The sequence spans 331 residues: MVKKIGVLTSGGDAPGMNAAIRGVVRAALSEGLEVYGIEDGYLGLYHNRMKQLDRYSVSDMINRGGTFLGSARFPEFRDPEIRKIALQNMKERGIDGLVVIGGDGSYAGADLLTKEGGIHCVGLPGTIDNDVAGTDYTIGFFTALETVVEAIDRLRDTSSSHQRISIVEVMGRFCGDLTLAAAIAGGCEFIAIPEVEFKREDLVKEIKAGIAKGKKHAIVAITEKLDNIDELAKYIEKETDRETRGTVLGHIQRGGAPVAYDRILASRMGAYAVDLLVNKISPPLNFSSGGFCVGIQNEKMVHELISVCIAPENKKSKFKEDWYDTAKKLF.

Gly12 serves as a coordination point for ATP. ADP is bound by residues 22–26 (RGVVR) and 55–60 (RYSVSD). Residues 73–74 (RF) and 103–106 (GDGS) contribute to the ATP site. Asp104 provides a ligand contact to Mg(2+). 127-129 (TID) contributes to the substrate binding site. The active-site Proton acceptor is the Asp129. Arg156 lines the ADP pocket. Residues Arg164 and 171-173 (MGR) each bind substrate. Residues 187–189 (GCE), Lys213, and 215–217 (KKH) contribute to the ADP site. Substrate contacts are provided by residues Glu224, Arg245, and 251-254 (HIQR).

Belongs to the phosphofructokinase type A (PFKA) family. ATP-dependent PFK group I subfamily. Prokaryotic clade 'B1' sub-subfamily. In terms of assembly, homotetramer. It depends on Mg(2+) as a cofactor.

The protein localises to the cytoplasm. It catalyses the reaction beta-D-fructose 6-phosphate + ATP = beta-D-fructose 1,6-bisphosphate + ADP + H(+). It participates in carbohydrate degradation; glycolysis; D-glyceraldehyde 3-phosphate and glycerone phosphate from D-glucose: step 3/4. Allosterically activated by ADP and other diphosphonucleosides, and allosterically inhibited by phosphoenolpyruvate. In terms of biological role, catalyzes the phosphorylation of D-fructose 6-phosphate to fructose 1,6-bisphosphate by ATP, the first committing step of glycolysis. The polypeptide is ATP-dependent 6-phosphofructokinase (Yersinia enterocolitica serotype O:8 / biotype 1B (strain NCTC 13174 / 8081)).